Consider the following 1003-residue polypeptide: PHD finger protein 12 (1003 aa).

Residues 29 to 59 (APPKTDEAEKRSRKPEKESRRSGRATNHDSC) are disordered. Over residues 32–59 (KTDEAEKRSRKPEKESRRSGRATNHDSC) the composition is skewed to basic and acidic residues. Residues 56 to 105 (HDSCDSCKEGGDLLCCDHCPAAFHLQCCNPPLSEEMLPPGEWMCHRCTVR) form a PHD-type 1 zinc finger. Zn(2+)-binding residues include cysteine 59, serine 61, cysteine 62, histidine 79, and cysteine 82. Disordered regions lie at residues 110 to 183 (EQKK…HNDV) and 234 to 255 (TTAL…KNVK). 2 positions are modified to phosphoserine: serine 131 and serine 134. Residues 138-161 (LLDRPASKTELKAIAHARILERRA) show a composition bias toward basic and acidic residues. Residues 165-178 (GTPTSNASTETPTS) are compositionally biased toward polar residues. The SIN3 interacting domain 1 stretch occupies residues 202–241 (VQPQLRRPFELLIAAAMERNPTQFQLPNELTCTTALPGSS). A PHD-type 2; atypical zinc finger spans residues 271-321 (VKVCFTCNRSCRVAPLIQCDYCPLLFHMDCLEPPLTAMPLGRWMCPNHIEH). Residues cysteine 274, cysteine 277, cysteine 289, cysteine 292, histidine 297, cysteine 300, cysteine 315, and histidine 318 each contribute to the Zn(2+) site. An SIN3 interacting domain 2 region spans residues 328–364 (NLTLSNRCQVFDRFQDTISQHVVKVDFLNRIHKKHPP). A Glycyl lysine isopeptide (Lys-Gly) (interchain with G-Cter in SUMO2) cross-link involves residue lysine 467. Disordered regions lie at residues 531–583 (KAPC…GWPR) and 641–671 (HRKT…VLTP). Serine 555 carries the post-translational modification Phosphoserine. 2 positions are modified to phosphothreonine: threonine 557 and threonine 570. A compositionally biased stretch (polar residues) spans 641 to 656 (HRKTVQSQIGPSSTES). Threonine 670 carries the post-translational modification Phosphothreonine. Residues 814–868 (LYIGTGADMDVCLTNYGHCNYVSGKHACIFYDENTKHYELLNYSEHGTTVDNVLY) enclose the FHA domain. The tract at residues 894 to 922 (RRRHQKQDEEPSEEAAMMSSQAQGPQRRP) is disordered. Lysine 899 is covalently cross-linked (Glycyl lysine isopeptide (Lys-Gly) (interchain with G-Cter in SUMO2)). Over residues 907–916 (EAAMMSSQAQ) the composition is skewed to low complexity. Residues lysine 972, lysine 986, and lysine 990 each participate in a glycyl lysine isopeptide (Lys-Gly) (interchain with G-Cter in SUMO2) cross-link.

Component of SIN3 complexes. Interacts with SIN3A in a complex composed of HDAC1, SAP30 and SIN3A. Component of the SIN3B complex, which includes SIN3B, HDAC2 or HDAC1, PHF12 and MORF4L1; interacts directly with all subunits. Interacts with TLE5. In terms of tissue distribution, expressed mainly in heart, brain, lung, liver and testis.

The protein localises to the nucleus. In terms of biological role, transcriptional repressor acting as key scaffolding subunit of SIN3 complexes which contributes to complex assembly by contacting each core subunit domain, stabilizes the complex and constitutes the substrate receptor by recruiting the H3 histone tail. SIN3 complexes are composed of a SIN3 scaffold subunit, one catalytic core (HDAC1 or HDAC2) and 2 chromatin targeting modules. SIN3B complex represses transcription and counteracts the histone acetyltransferase activity of EP300 through the recognition H3K27ac marks by PHF12 and the activity of the histone deacetylase HDAC2. SIN3B complex is recruited downstream of the constitutively active genes transcriptional start sites through interaction with histones and mitigates histone acetylation and RNA polymerase II progression within transcribed regions contributing to the regulation of transcription. May also repress transcription in a SIN3A-independent manner through recruitment of functional TLE5 complexes to DNA. May also play a role in ribosomal biogenesis. The protein is PHD finger protein 12 of Mus musculus (Mouse).